A 171-amino-acid chain; its full sequence is Non-specific lipid transfer protein GPI-anchored 19 (171 aa).

Residues 1–18 (MILAILALVIATFLYGGA) form the signal peptide. Disulfide bonds link Cys-25-Cys-66, Cys-35-Cys-50, Cys-51-Cys-93, and Cys-64-Cys-103. N-linked (GlcNAc...) asparagine glycosylation is found at Asn-72 and Asn-82. A disordered region spans residues 113–149 (LPANTPVGSPRSAPSPSGTTSPANTPSGSKKFPLSNE). Over residues 118–141 (PVGSPRSAPSPSGTTSPANTPSGS) the composition is skewed to low complexity. Ser-147 carries the GPI-anchor amidated serine lipid modification. N-linked (GlcNAc...) asparagine glycosylation is present at Asn-148. A propeptide spans 148–171 (NESSSKSNVIILSFVSIALVLAII) (removed in mature form).

It belongs to the plant LTP family.

It localises to the cell membrane. Its function is as follows. Probable lipid transfer protein. The protein is Non-specific lipid transfer protein GPI-anchored 19 of Arabidopsis thaliana (Mouse-ear cress).